The sequence spans 102 residues: Small ribosomal subunit protein uS10 (102 aa).

This sequence belongs to the universal ribosomal protein uS10 family. Part of the 30S ribosomal subunit.

Functionally, involved in the binding of tRNA to the ribosomes. In Caulobacter sp. (strain K31), this protein is Small ribosomal subunit protein uS10.